Consider the following 175-residue polypeptide: MSKQDEVIVVGKFGASYGIRGWLKVVSFTDQPESIFDYKPLLIKVKDEWVEFSVESWKRHKGLVCKLEGLEVREEAQAYTNLEIAVKADALPELSEDEFYWRELFGMEVVTSQGYGLGIVDDIFETGSNDVLVVKANLKDAFGKKERLIPFIDEQVIKVIDREAQRIEVDWDPGF.

Residues 95–175 (SEDEFYWREL…RIEVDWDPGF (81 aa)) form the PRC barrel domain.

It belongs to the RimM family. Binds ribosomal protein uS19.

It is found in the cytoplasm. Its function is as follows. An accessory protein needed during the final step in the assembly of 30S ribosomal subunit, possibly for assembly of the head region. Essential for efficient processing of 16S rRNA. May be needed both before and after RbfA during the maturation of 16S rRNA. It has affinity for free ribosomal 30S subunits but not for 70S ribosomes. The protein is Ribosome maturation factor RimM of Aliivibrio salmonicida (strain LFI1238) (Vibrio salmonicida (strain LFI1238)).